We begin with the raw amino-acid sequence, 477 residues long: MKILFVAAEGAPFSKTGGLGDVIGALPKSLVKAGHEVAVILPYYDMVEAKFGNQIEDVLHFEVSVGWRRQYCGIKKTVLNGVTFYFIDNQYYFFRGHVYGDFDDGERFAFFQLAAIEAMERIAFIPDLLHVHDYHTAMIPFLLKEKYRWIQAYEDIETVLTIHNLEFQGQFSEGMLGDLFGVGFERYADGTLRWNNCLNWMKAGILYANRVSTVSPSYAHEIMTSQFGCNLDQILKMESGKVSGIVNGIDADLYNPQTDALLDYHFNQEDLSGKAKNKAKLQERVGLPVRADVPLVGIVSRLTRQKGFDVVVESLHHILQEDVQIVLLGTGDPAFEGAFSWFAQIYPDKLSANITFDVKLAQEIYAACDLFLMPSRFEPCGLSQMMAMRYGTLPLVHEVGGLRDTVCAFNPIEGSGTGFSFDNLSPYWLNWTFQTALDLYRNHPDIWRNLQKQAMESDFSWDTACKSYLDLYHSLVN.

Lys15 serves as a coordination point for ADP-alpha-D-glucose.

Belongs to the glycosyltransferase 1 family. Bacterial/plant glycogen synthase subfamily.

It catalyses the reaction [(1-&gt;4)-alpha-D-glucosyl](n) + ADP-alpha-D-glucose = [(1-&gt;4)-alpha-D-glucosyl](n+1) + ADP + H(+). It participates in glycan biosynthesis; glycogen biosynthesis. In terms of biological role, synthesizes alpha-1,4-glucan chains using ADP-glucose. The sequence is that of Glycogen synthase from Streptococcus pneumoniae (strain Hungary19A-6).